Consider the following 111-residue polypeptide: T cell receptor beta variable 30 (111 aa).

A signal peptide spans 1 to 18; that stretch reads MLCSLLALLLGTFFGVRS. The region spanning 19 to 111 is the Ig-like domain; the sequence is QTIHQWPATL…DSGFYLCAWS (93 aa). C40 and C108 are disulfide-bonded. A glycan (N-linked (GlcNAc...) asparagine) is linked at N80.

In terms of assembly, alpha-beta TR is a heterodimer composed of an alpha and beta chain; disulfide-linked. The alpha-beta TR is associated with the transmembrane signaling CD3 coreceptor proteins to form the TR-CD3 (TcR or TCR). The assembly of alpha-beta TR heterodimers with CD3 occurs in the endoplasmic reticulum where a single alpha-beta TR heterodimer associates with one CD3D-CD3E heterodimer, one CD3G-CD3E heterodimer and one CD247 homodimer forming a stable octameric structure. CD3D-CD3E and CD3G-CD3E heterodimers preferentially associate with TR alpha and TR beta chains, respectively. The association of the CD247 homodimer is the last step of TcR assembly in the endoplasmic reticulum and is required for transport to the cell surface.

Its subcellular location is the cell membrane. V region of the variable domain of T cell receptor (TR) beta chain that participates in the antigen recognition. Alpha-beta T cell receptors are antigen specific receptors which are essential to the immune response and are present on the cell surface of T lymphocytes. Recognize peptide-major histocompatibility (MH) (pMH) complexes that are displayed by antigen presenting cells (APC), a prerequisite for efficient T cell adaptive immunity against pathogens. Binding of alpha-beta TR to pMH complex initiates TR-CD3 clustering on the cell surface and intracellular activation of LCK that phosphorylates the ITAM motifs of CD3G, CD3D, CD3E and CD247 enabling the recruitment of ZAP70. In turn ZAP70 phosphorylates LAT, which recruits numerous signaling molecules to form the LAT signalosome. The LAT signalosome propagates signal branching to three major signaling pathways, the calcium, the mitogen-activated protein kinase (MAPK) kinase and the nuclear factor NF-kappa-B (NF-kB) pathways, leading to the mobilization of transcription factors that are critical for gene expression and essential for T cell growth and differentiation. The T cell repertoire is generated in the thymus, by V-(D)-J rearrangement. This repertoire is then shaped by intrathymic selection events to generate a peripheral T cell pool of self-MH restricted, non-autoaggressive T cells. Post-thymic interaction of alpha-beta TR with the pMH complexes shapes TR structural and functional avidity. This chain is T cell receptor beta variable 30, found in Homo sapiens (Human).